The following is a 64-amino-acid chain: Small ribosomal subunit protein bS21 (64 aa).

It belongs to the bacterial ribosomal protein bS21 family.

The polypeptide is Small ribosomal subunit protein bS21 (Anaeromyxobacter dehalogenans (strain 2CP-1 / ATCC BAA-258)).